The following is a 265-amino-acid chain: Capsule polysaccharide export inner-membrane protein BexB (265 aa).

A run of 6 helical transmembrane segments spans residues 37–57 (IGFF…VMMW), 64–84 (KFST…AMMW), 118–138 (LLEV…LVMI), 151–171 (LIAW…ICAI), 178–198 (FGKI…AFFF), and 235–255 (ESIG…LVMV). Residues 37-258 (IGFFWLFVEP…LLGLVMVKNF (222 aa)) form the ABC transmembrane type-2 domain.

Belongs to the ABC-2 integral membrane protein family.

The protein localises to the cell inner membrane. Functionally, may form an ATP-driven capsule polysaccharide export apparatus, in association with the BexA, BexC and BexD proteins. This Haemophilus influenzae protein is Capsule polysaccharide export inner-membrane protein BexB (bexB).